Here is a 382-residue protein sequence, read N- to C-terminus: Sphingoid long-chain base transporter RSB1 (382 aa).

Residues 1-34 (MSNATNNTLGSLLPQLEAAANSNSLYGGMVPNLR) lie on the Extracellular side of the membrane. N-linked (GlcNAc...) asparagine glycans are attached at residues Asn3 and Asn6. The chain crosses the membrane as a helical span at residues 35 to 55 (FNITMIVIWGILLTIHVVQLL). The Cytoplasmic portion of the chain corresponds to 56-57 (MR). The chain crosses the membrane as a helical span at residues 58 to 78 (QYWFSIAFICTGILEVLGFIG). At 79-90 (RTWSHSNVADMD) the chain is on the extracellular side. The helical transmembrane segment at 91-111 (AFLLNMICLTIAPVFTMGGIY) threads the bilayer. At 112-135 (YQLAKLIEVYGHRFSLLPSPMAYS) the chain is on the cytoplasmic side. Residues 136–156 (FIFICSDIVSLVVQAVGGGLC) form a helical membrane-spanning segment. Residues 157 to 171 (GVAVTDGTSTTTGNH) lie on the Extracellular side of the membrane. The helical transmembrane segment at 172-192 (VFIAGLAIQVASMAIFLMLWF) threads the bilayer. The Cytoplasmic segment spans residues 193 to 241 (HFLFRIYISVRWEHINSRPISLSLLKISQTEVDYLYREKFHFLRLEPKR). Residues 242 to 262 (WVFHYFNLAMTVAVLTIFTRC) form a helical membrane-spanning segment. Over 263–281 (CYRLAELVVGWDGYLITHE) the chain is Extracellular. Residues 282-302 (WYFIILDALMMAIATVTLTIF) form a helical membrane-spanning segment. Over 303–382 (HPGFAFKGRS…LFSSKKKAKL (80 aa)) the chain is Cytoplasmic.

This sequence belongs to the lipid-translocating exporter (LTE) (TC 9.A.26.1) family.

It is found in the cell membrane. In terms of biological role, catalyzes the ATP-dependent translocation of sphingoid long-chain bases (LCBs) from the cytoplasmic site toward the extracytoplasmic side of the membrane (flip-flop). Involved in the establishment of the functional lipid asymmetry of the plasma membrane. Regulates intracellular levels of LCBs, sphingolipid precursors that are growth inhibitory at increased levels. This is Sphingoid long-chain base transporter RSB1 (RSB1) from Saccharomyces cerevisiae (strain RM11-1a) (Baker's yeast).